The primary structure comprises 88 residues: MDGLTAAESRELDQRLQKRQVKEFMSVFGNLVDNCFTACVDDFTSKALSGRESGCISRCVLKSMSTQTRLGERFGELNAAMTAEMQRR.

Residues 35–59 carry the Twin CX3C motif motif; that stretch reads CFTACVDDFTSKALSGRESGCISRC. 2 disulfide bridges follow: cysteine 35–cysteine 59 and cysteine 39–cysteine 55.

Belongs to the small Tim family. As to quaternary structure, heterohexamer; composed of 3 copies of tim9 and 3 copies of tim10, named soluble 70 kDa complex. Associates with the tim22 complex, whose core is composed of tim22 and tim54. Interacts with the transmembrane regions of multi-pass transmembrane proteins in transit.

The protein resides in the mitochondrion inner membrane. In terms of biological role, mitochondrial intermembrane chaperone that participates in the import and insertion of multi-pass transmembrane proteins into the mitochondrial inner membrane. Also required for the transfer of beta-barrel precursors from the TOM complex to the sorting and assembly machinery (SAM complex) of the outer membrane. Acts as a chaperone-like protein that protects the hydrophobic precursors from aggregation and guide them through the mitochondrial intermembrane space. This chain is Mitochondrial import inner membrane translocase subunit tim9 (tim9), found in Neurospora crassa (strain ATCC 24698 / 74-OR23-1A / CBS 708.71 / DSM 1257 / FGSC 987).